The chain runs to 222 residues: UPF0758 protein YicR (222 aa).

Residues 100-222 enclose the MPN domain; sequence PLLSPEMTRE…YVSFAERGWI (123 aa). The Zn(2+) site is built by H171, H173, and D184. A JAMM motif motif is present at residues 171–184; the sequence is HNHPSGCAEPSKAD.

Belongs to the UPF0758 family. YicR subfamily.

The chain is UPF0758 protein YicR from Escherichia coli (strain 55989 / EAEC).